Reading from the N-terminus, the 213-residue chain is FMN-dependent NADH:quinone oxidoreductase (213 aa).

Ser10 contacts FMN.

The protein belongs to the azoreductase type 1 family. Homodimer. It depends on FMN as a cofactor.

The catalysed reaction is 2 a quinone + NADH + H(+) = 2 a 1,4-benzosemiquinone + NAD(+). The enzyme catalyses N,N-dimethyl-1,4-phenylenediamine + anthranilate + 2 NAD(+) = 2-(4-dimethylaminophenyl)diazenylbenzoate + 2 NADH + 2 H(+). In terms of biological role, quinone reductase that provides resistance to thiol-specific stress caused by electrophilic quinones. Functionally, also exhibits azoreductase activity. Catalyzes the reductive cleavage of the azo bond in aromatic azo compounds to the corresponding amines. This Opitutus terrae (strain DSM 11246 / JCM 15787 / PB90-1) protein is FMN-dependent NADH:quinone oxidoreductase.